We begin with the raw amino-acid sequence, 402 residues long: S-adenosylmethionine synthase (402 aa).

137-142 (GQGSAD) contacts ATP.

The protein belongs to the AdoMet synthase 2 family. Mg(2+) serves as cofactor.

It carries out the reaction L-methionine + ATP + H2O = S-adenosyl-L-methionine + phosphate + diphosphate. The protein operates within amino-acid biosynthesis; S-adenosyl-L-methionine biosynthesis; S-adenosyl-L-methionine from L-methionine: step 1/1. Functionally, catalyzes the formation of S-adenosylmethionine from methionine and ATP. The sequence is that of S-adenosylmethionine synthase from Pyrobaculum calidifontis (strain DSM 21063 / JCM 11548 / VA1).